The chain runs to 150 residues: 3-dehydroquinate dehydratase (150 aa).

The active-site Proton acceptor is the tyrosine 26. Substrate is bound by residues asparagine 77, histidine 83, and aspartate 90. The active-site Proton donor is histidine 103. Residues 104–105 and arginine 114 each bind substrate; that span reads LS.

Belongs to the type-II 3-dehydroquinase family. In terms of assembly, homododecamer.

The enzyme catalyses 3-dehydroquinate = 3-dehydroshikimate + H2O. It participates in metabolic intermediate biosynthesis; chorismate biosynthesis; chorismate from D-erythrose 4-phosphate and phosphoenolpyruvate: step 3/7. Functionally, catalyzes a trans-dehydration via an enolate intermediate. The protein is 3-dehydroquinate dehydratase of Citrobacter koseri (strain ATCC BAA-895 / CDC 4225-83 / SGSC4696).